The sequence spans 206 residues: Probable peptidyl-tRNA hydrolase (206 aa).

Catalysis depends on His-48, which acts as the Proton acceptor. TRNA contacts are provided by Tyr-83, Asn-85, and Asn-137.

This sequence belongs to the PTH family.

It localises to the mitochondrion. It catalyses the reaction an N-acyl-L-alpha-aminoacyl-tRNA + H2O = an N-acyl-L-amino acid + a tRNA + H(+). Functionally, peptidyl-tRNA hydrolase involved in the recycling of tRNA-Lys from diacetyl-lysyl-tRNA-Lys and is important for mitochondrial function. The sequence is that of Probable peptidyl-tRNA hydrolase (pth1) from Schizosaccharomyces pombe (strain 972 / ATCC 24843) (Fission yeast).